Reading from the N-terminus, the 261-residue chain is Chloroplastic import inner membrane translocase subunit HP30-1 (261 aa).

4 consecutive transmembrane segments (helical) span residues 59-77 (AAVV…GGLM), 113-129 (NFAA…SVMK), 139-155 (SAVV…SLVS), and 163-180 (MNAI…GVFF).

The protein belongs to the Tim17/Tim22/Tim23 family. Probable component of a protein-conducting channel made of HP30-1, HP30-2 and HP20 that mediates the import of transit sequence-less proteins into the chloroplastic inner membrane. Interacts with CEQORH.

It is found in the plastid. It localises to the chloroplast inner membrane. In terms of biological role, together with HP30-2 and HP20, triggers the import and insertion of transit sequence-less multi-pass transmembrane proteins (e.g. CEQORH) into the chloroplastic inner membrane. This Arabidopsis thaliana (Mouse-ear cress) protein is Chloroplastic import inner membrane translocase subunit HP30-1.